A 465-amino-acid chain; its full sequence is Sushi repeat-containing protein SRPX2 (465 aa).

Residues Met1–Pro23 form the signal peptide. Sushi domains are found at residues Ala69–Gln119, Met120–Asp178, and Arg262–Pro321. 4 cysteine pairs are disulfide-bonded: Cys71–Cys105, Cys91–Cys117, Cys122–Cys163, and Cys149–Cys176. An HYR domain is found at Val177–Val261. 2 disulfides stabilise this stretch: Cys264/Cys306 and Cys292/Cys319.

As to quaternary structure, forms homooligomers. Interacts with PLAUR (via the UPAR/Ly6 domains), ADAMTS4 and CTSB. Interacts with HGF; the interaction increases the mitogenic activity of HGF. Contains chondroitin sulfate chains.

The protein resides in the secreted. It localises to the cytoplasm. It is found in the cell surface. Its subcellular location is the synapse. Its function is as follows. Acts as a ligand for the urokinase plasminogen activator surface receptor. Plays a role in angiogenesis by inducing endothelial cell migration and the formation of vascular network (cords). Involved in cellular migration and adhesion. Increases the phosphorylation levels of FAK. Interacts with and increases the mitogenic activity of HGF. Promotes synapse formation. This is Sushi repeat-containing protein SRPX2 (SRPX2) from Bos taurus (Bovine).